Consider the following 319-residue polypeptide: tRNA uridine(34) hydroxylase (319 aa).

Residues 125-219 enclose the Rhodanese domain; the sequence is LDENTVVIDA…YGKDPEVQGD (95 aa). The active-site Cysteine persulfide intermediate is Cys179.

The protein belongs to the TrhO family.

The enzyme catalyses uridine(34) in tRNA + AH2 + O2 = 5-hydroxyuridine(34) in tRNA + A + H2O. Its function is as follows. Catalyzes oxygen-dependent 5-hydroxyuridine (ho5U) modification at position 34 in tRNAs. This Lactococcus lactis subsp. lactis (strain IL1403) (Streptococcus lactis) protein is tRNA uridine(34) hydroxylase.